The chain runs to 363 residues: Homeobox protein Hox-A2 (363 aa).

Disordered regions lie at residues 23–133 (TSFP…SRRL) and 183–216 (MKHKRQTQCKENQNGDGKFKNLEDSGQTEDDEEK). Polar residues-rich tracts occupy residues 31–46 (TFQSSSIKNSTLSHST) and 55–78 (TIPSLNPSSHPRQSRPKQSPNGTS). The Antp-type hexapeptide signature appears at 88-93 (EYPWMK). The segment at residues 130–189 (SRRLRTAYTNTQLLELEKEFHFNKYLCRPRRVEIAALLDLTERQVKVWFQNRRMKHKRQT) is a DNA-binding region (homeobox).

This sequence belongs to the Antp homeobox family. Proboscipedia subfamily.

Its subcellular location is the nucleus. Sequence-specific transcription factor which is part of a developmental regulatory system that provides cells with specific positional identities on the anterior-posterior axis. In Heterodontus francisci (Horn shark), this protein is Homeobox protein Hox-A2 (HOXA2).